The following is a 379-amino-acid chain: Transcription termination factor 1b, mitochondrial (379 aa).

A mitochondrion-targeting transit peptide spans 1–37 (MASRNIWCVRRNFLFDLRGWMLQYSAEVFLKSISFRT). Interaction with DNA stretches follow at residues 151 to 152 (RS), 229 to 233 (QSTKR), 306 to 313 (SEKKFNDK), 337 to 340 (SINT), and 366 to 373 (SQRRYEAK).

Belongs to the mTERF family. In terms of assembly, monomer. Phosphoprotein with mostly four phosphate groups. While the DNA-binding activity is unaffected by the phosphorylation state, only the phosphorylated form of the protein is active for termination activity. Functioning seems to be regulated by phosphorylation. In terms of tissue distribution, expressed strongly in the heart and at lower levels in brain, liver and kidney.

The protein resides in the mitochondrion. Its function is as follows. Transcription termination factor. Binds to a 28 bp region within the tRNA(Leu(uur)) gene at a position immediately adjacent to and downstream of the 16S rRNA gene; this region comprises a tridecamer sequence critical for directing accurate termination. Binds DNA along the major grove and promotes DNA bending and partial unwinding. Promotes base flipping. Transcription termination activity appears to be polarized with highest specificity for transcripts initiated on the light strand. The sequence is that of Transcription termination factor 1b, mitochondrial from Mus musculus (Mouse).